The primary structure comprises 126 residues: uncharacterized protein (126 aa).

The interval 83–126 (VPPPLDRSHESPEEFFPPQNRNRGGGPKAQIQRHPPEALEKTTH) is disordered. Over residues 116-126 (HPPEALEKTTH) the composition is skewed to basic and acidic residues.

This is an uncharacterized protein from Galliformes (FAdV-1).